A 230-amino-acid polypeptide reads, in one-letter code: Sugar fermentation stimulation protein homolog (230 aa).

The protein belongs to the SfsA family.

The chain is Sugar fermentation stimulation protein homolog from Clostridium perfringens (strain ATCC 13124 / DSM 756 / JCM 1290 / NCIMB 6125 / NCTC 8237 / Type A).